The primary structure comprises 360 residues: MSELHEVQITEDNPLLQDPLKAAELAAKLLQVQEQKHSIETPYGVVTVTIQGTPKPKRPAIVTFHDVGMDHKMCFDTLFKYEDMCEIVKNFVVCHIDAPGQEDGATIYPPGYQYPSLDQLAETIPCVLQYLNFPSIIGIGVGAGAYIFAKYTLSHANTVEGLVLINIDPNAKGWMDWAAQKLTGLTQSISDKMLGHLFSAEEISGNSDVVRQYKASISNSPLISNYQLYWNSYNSRRDLNFERGGGVTLKCPVMLVVGDQAPHEDAVVECNSKLDPTQTSFLKMADSGGQPQITQPGKMTEAFKYFVQGMGYMASSVMTRLSRSRTASLSSEGNRSRSRTLSQSSESGGGPPAPLAEVTC.

The tract at residues 324–360 is disordered; sequence SRTASLSSEGNRSRSRTLSQSSESGGGPPAPLAEVTC.

Belongs to the NDRG family.

It is found in the cytoplasm. Contributes to the regulation of the Wnt signaling pathway. Down-regulates CTNNB1-mediated transcriptional activation of target genes. May be involved in neuron differentiation. This is Protein NDRG2 (ndrg2) from Xenopus laevis (African clawed frog).